The sequence spans 599 residues: Elongation factor 4 (599 aa).

Positions 5-187 constitute a tr-type G domain; sequence SHIRNFSIIA…RLVHTIPAPV (183 aa). Residues 17 to 22 and 134 to 137 contribute to the GTP site; these read DHGKST and NKMD.

This sequence belongs to the TRAFAC class translation factor GTPase superfamily. Classic translation factor GTPase family. LepA subfamily.

It localises to the cell inner membrane. The enzyme catalyses GTP + H2O = GDP + phosphate + H(+). In terms of biological role, required for accurate and efficient protein synthesis under certain stress conditions. May act as a fidelity factor of the translation reaction, by catalyzing a one-codon backward translocation of tRNAs on improperly translocated ribosomes. Back-translocation proceeds from a post-translocation (POST) complex to a pre-translocation (PRE) complex, thus giving elongation factor G a second chance to translocate the tRNAs correctly. Binds to ribosomes in a GTP-dependent manner. This chain is Elongation factor 4, found in Pseudomonas putida (strain W619).